The sequence spans 92 residues: UPF0297 protein TTE1249 (92 aa).

This sequence belongs to the UPF0297 family.

This is UPF0297 protein TTE1249 from Caldanaerobacter subterraneus subsp. tengcongensis (strain DSM 15242 / JCM 11007 / NBRC 100824 / MB4) (Thermoanaerobacter tengcongensis).